A 591-amino-acid polypeptide reads, in one-letter code: Speriolin (591 aa).

Residues Met1–Lys42 are a coiled coil. Residues Met1–Pro78 form a necessary for targeting centrosomes region. Positions Asn302–Gln314 are enriched in polar residues. 2 disordered regions span residues Asn302–Thr331 and Ala346–Arg435. The span at Val317 to Thr331 shows a compositional bias: low complexity. Polar residues-rich tracts occupy residues Ala346 to Ile357 and Pro390 to Asp401.

The protein belongs to the speriolin family. Found in a complex with CDC20, CDC27 and TUBG1. Interacts with CDC20. As to expression, detected only in testis.

The protein localises to the cytoplasm. It is found in the cytoskeleton. It localises to the microtubule organizing center. The protein resides in the centrosome. This chain is Speriolin (SPATC1), found in Homo sapiens (Human).